The primary structure comprises 186 residues: ATP synthase subunit delta (186 aa).

Belongs to the ATPase delta chain family. F-type ATPases have 2 components, F(1) - the catalytic core - and F(0) - the membrane proton channel. F(1) has five subunits: alpha(3), beta(3), gamma(1), delta(1), epsilon(1). CF(0) has four main subunits: a(1), b(1), b'(1) and c(10-14). The alpha and beta chains form an alternating ring which encloses part of the gamma chain. F(1) is attached to F(0) by a central stalk formed by the gamma and epsilon chains, while a peripheral stalk is formed by the delta, b and b' chains.

The protein resides in the cell inner membrane. Functionally, f(1)F(0) ATP synthase produces ATP from ADP in the presence of a proton or sodium gradient. F-type ATPases consist of two structural domains, F(1) containing the extramembraneous catalytic core and F(0) containing the membrane proton channel, linked together by a central stalk and a peripheral stalk. During catalysis, ATP synthesis in the catalytic domain of F(1) is coupled via a rotary mechanism of the central stalk subunits to proton translocation. Its function is as follows. This protein is part of the stalk that links CF(0) to CF(1). It either transmits conformational changes from CF(0) to CF(1) or is implicated in proton conduction. This is ATP synthase subunit delta from Rhodopseudomonas palustris (strain BisB5).